Consider the following 199-residue polypeptide: MDLYPESILNLIKSLSTLPGIGRRTAERLALHILHAPLHEAQTLANDILELKQKVTLCRTCFSLSDQPECRICSNPRRDASIICVVEKPTDIVAIEKSGAFSGLYHVLGGALSPMDGIGPDELRIRELFSRACSKTTTEVIIATGTNVEGEATAAYISDQLRKKGVNVTRIASGVPMGGDFQYVDQVTMQRAMEGRRGF.

The C4-type zinc-finger motif lies at 58 to 73 (CRTCFSLSDQPECRIC). A Toprim domain is found at 81–176 (SIICVVEKPT…NVTRIASGVP (96 aa)).

It belongs to the RecR family.

Functionally, may play a role in DNA repair. It seems to be involved in an RecBC-independent recombinational process of DNA repair. It may act with RecF and RecO. The sequence is that of Recombination protein RecR from Desulforapulum autotrophicum (strain ATCC 43914 / DSM 3382 / VKM B-1955 / HRM2) (Desulfobacterium autotrophicum).